Reading from the N-terminus, the 522-residue chain is 2-isopropylmalate synthase (522 aa).

The 263-residue stretch at 5-267 (VIIFDTTLRD…ETGINAKEIH (263 aa)) folds into the Pyruvate carboxyltransferase domain. The Mn(2+) site is built by Asp-14, His-202, His-204, and Asn-238. Residues 392–522 (QLQQLVVQSD…MQKNRELGGV (131 aa)) form a regulatory domain region.

Belongs to the alpha-IPM synthase/homocitrate synthase family. LeuA type 1 subfamily. In terms of assembly, homodimer. It depends on Mn(2+) as a cofactor.

It localises to the cytoplasm. It catalyses the reaction 3-methyl-2-oxobutanoate + acetyl-CoA + H2O = (2S)-2-isopropylmalate + CoA + H(+). The protein operates within amino-acid biosynthesis; L-leucine biosynthesis; L-leucine from 3-methyl-2-oxobutanoate: step 1/4. Catalyzes the condensation of the acetyl group of acetyl-CoA with 3-methyl-2-oxobutanoate (2-ketoisovalerate) to form 3-carboxy-3-hydroxy-4-methylpentanoate (2-isopropylmalate). The sequence is that of 2-isopropylmalate synthase from Shewanella baltica (strain OS223).